A 511-amino-acid polypeptide reads, in one-letter code: Coiled-coil domain-containing protein 125 (511 aa).

Residues 1 to 12 (MSKVARSSSESD) are compositionally biased toward polar residues. Positions 1–110 (MSKVARSSSE…TVDSNSELSN (110 aa)) are disordered. The span at 43 to 54 (EFSHRSRKRSDG) shows a compositional bias: basic and acidic residues. Polar residues predominate over residues 83-108 (QDTFPQVSRISNYRRQSSTVDSNSEL). 2 coiled-coil regions span residues 105–243 (NSEL…LEAL) and 293–325 (RMAA…MADA). Residue serine 504 is modified to Phosphoserine.

The protein localises to the cytoplasm. Functionally, may be involved in the regulation of cell migration. The sequence is that of Coiled-coil domain-containing protein 125 (CCDC125) from Homo sapiens (Human).